Here is a 541-residue protein sequence, read N- to C-terminus: Solute carrier family 2, facilitated glucose transporter member 10 (541 aa).

At 1 to 15 (MGHSPPVLPLCASVS) the chain is on the cytoplasmic side. Residues 16 to 36 (LLGGLTFGYELAVISGALLPL) form a helical membrane-spanning segment. Residues 37-48 (QLDFGLSCLEQE) are Extracellular-facing. Residues 49 to 69 (FLVGSLLLGALLASLVGGFLI) traverse the membrane as a helical segment. The Cytoplasmic portion of the chain corresponds to 70–77 (DCYGRKQA). A helical transmembrane segment spans residues 78–98 (ILGSNLVLLAGSLTLGLAGSL). Residues 99 to 106 (AWLVLGRA) lie on the Extracellular side of the membrane. A helical transmembrane segment spans residues 107–127 (VVGFAISLSSMACCIYVSELV). The Cytoplasmic segment spans residues 128 to 134 (GPRQRGV). A helical transmembrane segment spans residues 135 to 155 (LVSLYEAGITVGILLSYALNY). Residues 156–166 (ALAGTPWGWRH) are Extracellular-facing. Residues 167-187 (MFGWATAPAVLQSLSLLFLPA) form a helical membrane-spanning segment. Over 188–233 (GTDETATHKDLIPLQGGEAPKLGPGRPRYSFLDLFRARDNMRGRTT) the chain is Cytoplasmic. A helical transmembrane segment spans residues 234-254 (VGLGLVLFQQLTGQPNVLCYA). 242 to 243 (QQ) is a D-glucose binding site. Residues 255 to 269 (STIFSSVGFHGGSSA) lie on the Extracellular side of the membrane. A helical membrane pass occupies residues 270–290 (VLASVGLGAVKVAATLTAMGL). The Cytoplasmic segment spans residues 291–298 (VDRAGRRA). The helical transmembrane segment at 299 to 319 (LLLAGCALMALSVSGIGLVSF) threads the bilayer. At 320-414 (AVPMDSGPSC…HALLRWTALL (95 aa)) the chain is on the extracellular side. Asn-334 carries N-linked (GlcNAc...) asparagine glycosylation. A disordered region spans residues 340–388 (GLPGDSGLLQDSSLPPIPRTNEDQREPILSTAKKTKPHPRSGDPSAPPR). The helical transmembrane segment at 415–435 (CLMVFVSAFSFGFGPVTWLVL) threads the bilayer. Trp-432 provides a ligand contact to D-glucose. Over 436–445 (SEIYPVEIRG) the chain is Cytoplasmic. A helical membrane pass occupies residues 446 to 466 (RAFAFCNSFNWAANLFISLSF). Over 467–476 (LDLIGTIGLS) the chain is Extracellular. Residues 477 to 497 (WTFLLYGLTAVLGLGFIYLFV) traverse the membrane as a helical segment. Over 498 to 541 (PETKGQSLAEIDQQFQKRRFTLSFGHRQNSTGIPYSRIEISAAS) the chain is Cytoplasmic.

Belongs to the major facilitator superfamily. Sugar transporter (TC 2.A.1.1) family. Glucose transporter subfamily. Widely expressed; highest levels in liver and pancreas.

Its subcellular location is the endomembrane system. It localises to the cytoplasm. The protein localises to the perinuclear region. It catalyses the reaction D-glucose(out) = D-glucose(in). Facilitative glucose transporter required for the development of the cardiovascular system. The protein is Solute carrier family 2, facilitated glucose transporter member 10 of Homo sapiens (Human).